A 1172-amino-acid chain; its full sequence is Lysylphosphatidylglycerol biosynthesis bifunctional protein LysX (1172 aa).

The tract at residues 1 to 34 (MGLHLTVPGLRRDGRGVQSNSHDTSSKTTADISR) is disordered. The interval 1–663 (MGLHLTVPGL…LLHHDGSAPD (663 aa)) is phosphatidylglycerol lysyltransferase. Polar residues predominate over residues 17 to 31 (VQSNSHDTSSKTTAD). Helical transmembrane passes span 80–100 (VPAAAGWTVGVIATLSLLASV), 122–142 (FPDTNFAWSFVLALLAAALTA), 146–166 (IAWLVLLANMVLAAVVNAAEI), 177–197 (FGENLGFAVHVVAIVVLVLGY), 214–234 (AVWLAGAVVGIVASWGLVELF), 272–292 (AIFGLFGAFALIGAAIVLFLS), and 612–632 (VIPRVGVASVIAEGFLVLPFS). Positions 664–1172 (VSGLRQVGLT…TLPFPLAKPH (509 aa)) are lysine--tRNA ligase. The OB DNA-binding region spans 726-804 (VSVSGRIMRI…SLIVSGWRLI (79 aa)). Mg(2+)-binding residues include Asp-1084 and Glu-1091.

This sequence in the N-terminal section; belongs to the LPG synthetase family. The protein in the C-terminal section; belongs to the class-II aminoacyl-tRNA synthetase family. Mg(2+) is required as a cofactor.

The protein resides in the cell membrane. The catalysed reaction is tRNA(Lys) + L-lysine + ATP = L-lysyl-tRNA(Lys) + AMP + diphosphate. It carries out the reaction L-lysyl-tRNA(Lys) + a 1,2-diacyl-sn-glycero-3-phospho-(1'-sn-glycerol) = a 1,2-diacyl-sn-glycero-3-phospho-1'-(3'-O-L-lysyl)-sn-glycerol + tRNA(Lys). Catalyzes the production of L-lysyl-tRNA(Lys)transfer and the transfer of a lysyl group from L-lysyl-tRNA(Lys) to membrane-bound phosphatidylglycerol (PG), which produces lysylphosphatidylglycerol (LPG), one of the components of the bacterial membrane with a positive net charge. LPG synthesis contributes to the resistance to cationic antimicrobial peptides (CAMPs) and likely protects M.tuberculosis against the CAMPs produced by competiting microorganisms (bacteriocins). In fact, the modification of anionic phosphatidylglycerol with positively charged L-lysine results in repulsion of the peptides. The polypeptide is Lysylphosphatidylglycerol biosynthesis bifunctional protein LysX (lysX) (Mycobacterium tuberculosis (strain F11)).